Consider the following 179-residue polypeptide: ATP synthase subunit b, chloroplastic (179 aa).

A helical membrane pass occupies residues 35-51 (IVILGGGIFKLGSTALS).

The protein belongs to the ATPase B chain family. F-type ATPases have 2 components, F(1) - the catalytic core - and F(0) - the membrane proton channel. F(1) has five subunits: alpha(3), beta(3), gamma(1), delta(1), epsilon(1). F(0) has four main subunits: a(1), b(1), b'(1) and c(10-14). The alpha and beta chains form an alternating ring which encloses part of the gamma chain. F(1) is attached to F(0) by a central stalk formed by the gamma and epsilon chains, while a peripheral stalk is formed by the delta, b and b' chains.

It is found in the plastid. The protein resides in the chloroplast thylakoid membrane. F(1)F(0) ATP synthase produces ATP from ADP in the presence of a proton or sodium gradient. F-type ATPases consist of two structural domains, F(1) containing the extramembraneous catalytic core and F(0) containing the membrane proton channel, linked together by a central stalk and a peripheral stalk. During catalysis, ATP synthesis in the catalytic domain of F(1) is coupled via a rotary mechanism of the central stalk subunits to proton translocation. Functionally, component of the F(0) channel, it forms part of the peripheral stalk, linking F(1) to F(0). In Emiliania huxleyi (Coccolithophore), this protein is ATP synthase subunit b, chloroplastic.